We begin with the raw amino-acid sequence, 312 residues long: Protein PET122, mitochondrial (312 aa).

The N-terminal 12 residues, 1–12, are a transit peptide targeting the mitochondrion; sequence MIPTFRIQIRRY.

It is found in the mitochondrion inner membrane. Its function is as follows. Required for expression of the mitochondrial gene for cytochrome c oxidase subunit 3 (COX3). PET122 seems to work by directly interacting with the small ribosomal subunit to promote translation initiation on the COX3 mRNA. The polypeptide is Protein PET122, mitochondrial (PET122) (Lachancea kluyveri (strain ATCC 58438 / CBS 3082 / BCRC 21498 / NBRC 1685 / JCM 7257 / NCYC 543 / NRRL Y-12651) (Yeast)).